We begin with the raw amino-acid sequence, 571 residues long: Proline--tRNA ligase (571 aa).

Belongs to the class-II aminoacyl-tRNA synthetase family. ProS type 1 subfamily. As to quaternary structure, homodimer.

The protein resides in the cytoplasm. It carries out the reaction tRNA(Pro) + L-proline + ATP = L-prolyl-tRNA(Pro) + AMP + diphosphate. Catalyzes the attachment of proline to tRNA(Pro) in a two-step reaction: proline is first activated by ATP to form Pro-AMP and then transferred to the acceptor end of tRNA(Pro). As ProRS can inadvertently accommodate and process non-cognate amino acids such as alanine and cysteine, to avoid such errors it has two additional distinct editing activities against alanine. One activity is designated as 'pretransfer' editing and involves the tRNA(Pro)-independent hydrolysis of activated Ala-AMP. The other activity is designated 'posttransfer' editing and involves deacylation of mischarged Ala-tRNA(Pro). The misacylated Cys-tRNA(Pro) is not edited by ProRS. This Mannheimia succiniciproducens (strain KCTC 0769BP / MBEL55E) protein is Proline--tRNA ligase.